The following is a 152-amino-acid chain: D-aminoacyl-tRNA deacylase 1 (152 aa).

Residues 140–141 carry the Gly-cisPro motif, important for rejection of L-amino acids motif; the sequence is GP.

It belongs to the DTD family. Homodimer.

The protein resides in the cytoplasm. The enzyme catalyses glycyl-tRNA(Ala) + H2O = tRNA(Ala) + glycine + H(+). The catalysed reaction is a D-aminoacyl-tRNA + H2O = a tRNA + a D-alpha-amino acid + H(+). Functionally, an aminoacyl-tRNA editing enzyme that deacylates mischarged D-aminoacyl-tRNAs. Hydrolyzes correctly charged, achiral, glycyl-tRNA(Gly). Deacylates mischarged D.melanogaster and E.coli glycyl-tRNA(Ala), protecting cells against glycine mischarging by AlaRS. Acts via tRNA-based rather than protein-based catalysis; rejects L-amino acids rather than detecting D-amino acids in the active site. By recycling D-aminoacyl-tRNA to D-amino acids and free tRNA molecules, this enzyme counteracts the toxicity associated with the formation of D-aminoacyl-tRNA entities in vivo and helps enforce protein L-homochirality. The chain is D-aminoacyl-tRNA deacylase 1 (dtd1) from Leishmania major.